Here is a 159-residue protein sequence, read N- to C-terminus: Neuroglobin-2 (159 aa).

The Globin domain maps to 3-151; it reads KLTEKDKELI…VVAAMSRGWA (149 aa). Heme b-binding residues include His66 and His98.

This sequence belongs to the globin family. In terms of assembly, monomer. Homodimers and homotetramers. Mainly monomeric but also detected as part of homodimers and homotetramers.

The protein localises to the cytoplasm. The protein resides in the cytosol. Its subcellular location is the mitochondrion matrix. It catalyses the reaction Fe(III)-heme b-[protein] + nitric oxide + H2O = Fe(II)-heme b-[protein] + nitrite + 2 H(+). Monomeric globin with a bis-histidyl six-coordinate heme-iron atom through which it can bind dioxygen, carbon monoxide and nitric oxide. Could help transport oxygen and increase its availability to the metabolically active neuronal tissues, though its low quantity in tissues as well as its high affinity for dioxygen, which may limit its oxygen-releasing ability, argue against it. The ferrous/deoxygenated form exhibits a nitrite reductase activity and it could produce nitric oxide which in turn inhibits cellular respiration in response to hypoxia. In its ferrous/deoxygenated state, it may also exhibit GDI (Guanine nucleotide Dissociation Inhibitor) activity toward heterotrimeric G-alpha proteins, thereby regulating signal transduction to facilitate neuroprotective responses in the wake of hypoxia and associated oxidative stress. The polypeptide is Neuroglobin-2 (ngb2) (Oncorhynchus mykiss (Rainbow trout)).